The primary structure comprises 313 residues: MPIKIPDQLPATEVLREENIFFMQESRATTQAIRPLKVIILNLMPKKIETETQFLRLLSNSPLQVDVELLRIDNRTSKNTPTEHLDTFYRQFEGIKDRNFDGLIITGAPLGLVQFEDVIYWDHLQTIMTWAKDHVTSSLYVCWAAQAGLKLLYDLPKRTRKEKLSGVYKHTNLDQHHPILRGFDDQFLAPHSRYADFSADYLKSHTDLDILATSKEAGVYLAATKDKRNVFVTGHPEYDSFTLHNEYVRDLGEGMEPTIPVNYYPDDNPDITPKATWRSHGHLLFSNWLNYCVYQQTPYDLEHFSEQNFTRDE.

Catalysis depends on Cys-142, which acts as the Acyl-thioester intermediate. Substrate is bound by residues Lys-163 and Ser-192. His-235 serves as the catalytic Proton acceptor. Residue Glu-237 is part of the active site. Arg-249 is a substrate binding site.

Belongs to the MetA family.

Its subcellular location is the cytoplasm. The catalysed reaction is L-homoserine + succinyl-CoA = O-succinyl-L-homoserine + CoA. Its pathway is amino-acid biosynthesis; L-methionine biosynthesis via de novo pathway; O-succinyl-L-homoserine from L-homoserine: step 1/1. Its function is as follows. Transfers a succinyl group from succinyl-CoA to L-homoserine, forming succinyl-L-homoserine. The protein is Homoserine O-succinyltransferase of Aliivibrio fischeri (strain MJ11) (Vibrio fischeri).